We begin with the raw amino-acid sequence, 216 residues long: Cytochrome c oxidase assembly protein CtaG (216 aa).

Residues 1–23 (MTDAPQHPQQPATGTPATPKAAP) are compositionally biased toward low complexity. A disordered region spans residues 1-24 (MTDAPQHPQQPATGTPATPKAAPR). At 1–26 (MTDAPQHPQQPATGTPATPKAAPRVG) the chain is on the cytoplasmic side. Residues 27–49 (RDVRIGATCGLLVALMVGAAYAA) form a helical; Signal-anchor for type II membrane protein membrane-spanning segment. Residues 50 to 216 (VPFYNWFCRA…SEPDRPGGSI (167 aa)) are Periplasmic-facing.

This sequence belongs to the COX11/CtaG family.

Its subcellular location is the cell inner membrane. Exerts its effect at some terminal stage of cytochrome c oxidase synthesis, probably by being involved in the insertion of the copper B into subunit I. This chain is Cytochrome c oxidase assembly protein CtaG, found in Nitrobacter hamburgensis (strain DSM 10229 / NCIMB 13809 / X14).